The following is a 287-amino-acid chain: MASSAFAFPSYIITKGASTDSFKSTSLSSSRSLVTDFHLLFSRPISSGPKYQSAKSAKPESPVAINCLTDAKQVCAVGRRKSMMMGLLMSGLIVSQANLPTAFASTPVFREYIDTFDGYSFKYPQNWIQVRGAGADIFFRDPVVLDENLSVEFSSPSSSNYTSLEDLGSPEEVGKRVLRQYLTEFMSTRLGVKRQANILSTSSRVADDGKLYYQVEVNIKSYANNNELAVMPQDRVARLEWNRRYLAVLGVENDRLYSIRLQTPEKVFLEEEKDLRRVMDSFRVEKI.

Belongs to the PsbP family. In terms of assembly, partially associated with photosystem I (PSI) complex, but is not a subunit of the complex. Interacts with PsaA and PsaB, but not with PasF.

It is found in the plastid. It localises to the chloroplast thylakoid lumen. Photosystem I assembly factor that assists the proper folding and integration of PsaB and PsaA into the thylakoid membrane. The protein is PsbP domain-containing protein 1, chloroplastic (PPD1) of Arabidopsis thaliana (Mouse-ear cress).